Consider the following 642-residue polypeptide: uncharacterized protein (642 aa).

The Cytoplasmic portion of the chain corresponds to methionine 1–lysine 15. Residues proline 16–leucine 36 traverse the membrane as a helical segment. Topologically, residues threonine 37 to arginine 42 are extracellular. A helical transmembrane segment spans residues isoleucine 43–alanine 63. Residues asparagine 64–valine 73 are Cytoplasmic-facing. A helical membrane pass occupies residues glycine 74–valine 94. Over arginine 95–tryptophan 104 the chain is Extracellular. Residues tyrosine 105–leucine 125 form a helical membrane-spanning segment. Topologically, residues glutamine 126–glycine 142 are cytoplasmic. Residues valine 143–phenylalanine 163 traverse the membrane as a helical segment. The Extracellular segment spans residues arginine 164–serine 460. 2 disordered regions span residues glutamate 183–serine 206 and glycine 227–arginine 324. 2 stretches are compositionally biased toward polar residues: residues arginine 240–isoleucine 260 and isoleucine 272–aspartate 312. A helical transmembrane segment spans residues methionine 461–threonine 481. Over threonine 482–serine 499 the chain is Cytoplasmic. The chain crosses the membrane as a helical span at residues phenylalanine 500–leucine 520. Residues glycine 521–lysine 538 lie on the Extracellular side of the membrane. The chain crosses the membrane as a helical span at residues alanine 539 to cysteine 559. Residues aspartate 560–arginine 574 lie on the Cytoplasmic side of the membrane. The chain crosses the membrane as a helical span at residues methionine 575–phenylalanine 595. Topologically, residues threonine 596 to serine 614 are extracellular. A helical transmembrane segment spans residues phenylalanine 615 to phenylalanine 635. Topologically, residues leucine 636 to leucine 642 are cytoplasmic.

Belongs to the auxin efflux carrier (TC 2.A.69) family.

The protein resides in the membrane. This is an uncharacterized protein from Saccharomyces cerevisiae (strain ATCC 204508 / S288c) (Baker's yeast).